Consider the following 285-residue polypeptide: uncharacterized protein (285 aa).

The region spanning 92–199 (TLLLADVEES…PTINRTARLR (108 aa)) is the Guanylate cyclase domain.

The protein belongs to the adenylyl cyclase class-4/guanylyl cyclase family.

This is an uncharacterized protein from Mycobacterium tuberculosis (strain CDC 1551 / Oshkosh).